The following is a 159-amino-acid chain: Major latex protein 149 (159 aa).

This sequence belongs to the MLP family. Laticifer.

The protein localises to the vacuole. It localises to the cytoplasmic vesicle. Not known; MLPs constitute up to 50% of the soluble latex protein. The chain is Major latex protein 149 (MLP149) from Papaver somniferum (Opium poppy).